A 328-amino-acid chain; its full sequence is Anthranilate phosphoribosyltransferase (328 aa).

5-phospho-alpha-D-ribose 1-diphosphate-binding positions include Gly79, 82–83, Thr87, 89–92, 107–115, and Ser119; these read GD, NIST, and KHGNYAVSS. Gly79 is a binding site for anthranilate. Ser91 serves as a coordination point for Mg(2+). Residue Asn110 participates in anthranilate binding. Position 165 (Arg165) interacts with anthranilate. Positions 223 and 224 each coordinate Mg(2+).

The protein belongs to the anthranilate phosphoribosyltransferase family. Homodimer. Requires Mg(2+) as cofactor.

It catalyses the reaction N-(5-phospho-beta-D-ribosyl)anthranilate + diphosphate = 5-phospho-alpha-D-ribose 1-diphosphate + anthranilate. It participates in amino-acid biosynthesis; L-tryptophan biosynthesis; L-tryptophan from chorismate: step 2/5. Its function is as follows. Catalyzes the transfer of the phosphoribosyl group of 5-phosphorylribose-1-pyrophosphate (PRPP) to anthranilate to yield N-(5'-phosphoribosyl)-anthranilate (PRA). The protein is Anthranilate phosphoribosyltransferase of Cytophaga hutchinsonii (strain ATCC 33406 / DSM 1761 / CIP 103989 / NBRC 15051 / NCIMB 9469 / D465).